Reading from the N-terminus, the 79-residue chain is Acyl carrier protein (79 aa).

Residues 4 to 79 form the Carrier domain; sequence AEIKDKVYDI…QAIDYIVNKK (76 aa). An O-(pantetheine 4'-phosphoryl)serine modification is found at Ser39.

Belongs to the acyl carrier protein (ACP) family. 4'-phosphopantetheine is transferred from CoA to a specific serine of apo-ACP by AcpS. This modification is essential for activity because fatty acids are bound in thioester linkage to the sulfhydryl of the prosthetic group.

The protein resides in the cytoplasm. Its pathway is lipid metabolism; fatty acid biosynthesis. Its function is as follows. Carrier of the growing fatty acid chain in fatty acid biosynthesis. The chain is Acyl carrier protein from Chlorobaculum parvum (strain DSM 263 / NCIMB 8327) (Chlorobium vibrioforme subsp. thiosulfatophilum).